Consider the following 204-residue polypeptide: 3,4-dihydroxy-2-butanone 4-phosphate synthase (204 aa).

Mg(2+) is bound at residue glutamate 30. A D-ribulose 5-phosphate-binding site is contributed by aspartate 34. S-glutathionyl cysteine is present on cysteine 59. D-ribulose 5-phosphate is bound by residues threonine 85 and 142-146 (RRGHT). Mg(2+) is bound at residue histidine 145.

In terms of assembly, homodimer. It depends on Mg(2+) as a cofactor. Requires Mn(2+) as cofactor. In terms of processing, S-glutathionylation is reversible and dependent on a glutaredoxin.

It carries out the reaction D-ribulose 5-phosphate = (2S)-2-hydroxy-3-oxobutyl phosphate + formate + H(+). Its pathway is cofactor biosynthesis; riboflavin biosynthesis; 2-hydroxy-3-oxobutyl phosphate from D-ribulose 5-phosphate: step 1/1. Its function is as follows. Catalyzes the conversion of D-ribulose 5-phosphate to formate and 3,4-dihydroxy-2-butanone 4-phosphate. This is 3,4-dihydroxy-2-butanone 4-phosphate synthase (RIB3) from Candida albicans (strain SC5314 / ATCC MYA-2876) (Yeast).